The primary structure comprises 387 residues: MNKFLNKKWSLILTMGGIFLMATLSLIFATGKKAFNDQTSAEDIPSLAEAFRDYFPIGAAIEPGYTTGQIAELYKKHVNMLVAENAMKPASLQPTEGNFQWADADRIVQFAKENGMELRFHTLVWHNQTPTGFSLDKEGKPMVEETDPQKREENRKLLLQRLENYIRAVVLRYKDDIKSWDVVNEVIEPNDPGGMRNSPWYQITGTEYIEVAFRATREAGGSDIKLYINDYNTDDPVKRDILYELVKNLLEKGVPIDGVGHQTHIDIYNPPVERIIESIKKFAGLGLDNIITELDMSIYSWNDRSDYGDSIPDYILTLQAKRYQELFDALKENKDIVSAVVFWGISDKYSWLNGFPVKRTNAPLLFDRNFMPKPAFWAIVDPSRLRE.

Residues 41-382 (AEDIPSLAEA…KPAFWAIVDP (342 aa)) form the GH10 domain. Glutamate 185 acts as the Proton donor in catalysis. Glutamate 293 functions as the Nucleophile in the catalytic mechanism.

The protein belongs to the glycosyl hydrolase 10 (cellulase F) family.

It catalyses the reaction Endohydrolysis of (1-&gt;4)-beta-D-glucosidic linkages in cellulose, lichenin and cereal beta-D-glucans.. The enzyme catalyses Endohydrolysis of (1-&gt;4)-beta-D-xylosidic linkages in xylans.. It functions in the pathway glycan degradation; xylan degradation. Functionally, active toward xylan, carboxymethylcellulose, P-nitrophenyl-beta-D-xylopyranoside and P-nitrophenyl-beta-D-cellobioside. This is Thermostable celloxylanase (xynB) from Thermoclostridium stercorarium (Clostridium stercorarium).